A 135-amino-acid polypeptide reads, in one-letter code: Prostate and breast cancer overexpressed gene 1 protein (135 aa).

In terms of tissue distribution, expressed in colon, prostate, small intestine, testis and spleen, with lower expression in thymus, ovary, and peripheral blood leukocytes. Up-regulated expression in prostate, breast, and bladder cancer, but not in lung and colon cancer.

The protein resides in the cytoplasm. It localises to the nucleus. In Homo sapiens (Human), this protein is Prostate and breast cancer overexpressed gene 1 protein (PBOV1).